The sequence spans 140 residues: Endoribonuclease YbeY (140 aa).

Residues histidine 101, histidine 105, and histidine 111 each coordinate Zn(2+).

It belongs to the endoribonuclease YbeY family. The cofactor is Zn(2+).

Its subcellular location is the cytoplasm. Functionally, single strand-specific metallo-endoribonuclease involved in late-stage 70S ribosome quality control and in maturation of the 3' terminus of the 16S rRNA. The sequence is that of Endoribonuclease YbeY from Aliarcobacter butzleri (strain RM4018) (Arcobacter butzleri).